We begin with the raw amino-acid sequence, 301 residues long: Phosphoribosylaminoimidazole-succinocarboxamide synthase (301 aa).

Belongs to the SAICAR synthetase family.

It carries out the reaction 5-amino-1-(5-phospho-D-ribosyl)imidazole-4-carboxylate + L-aspartate + ATP = (2S)-2-[5-amino-1-(5-phospho-beta-D-ribosyl)imidazole-4-carboxamido]succinate + ADP + phosphate + 2 H(+). The protein operates within purine metabolism; IMP biosynthesis via de novo pathway; 5-amino-1-(5-phospho-D-ribosyl)imidazole-4-carboxamide from 5-amino-1-(5-phospho-D-ribosyl)imidazole-4-carboxylate: step 1/2. The sequence is that of Phosphoribosylaminoimidazole-succinocarboxamide synthase (ADE1) from Cyberlindnera jadinii (Torula yeast).